The sequence spans 617 residues: Hemagglutinin glycoprotein (617 aa).

The Intravirion segment spans residues 1–37 (MSPQRDRINAFYKDNPHPKGSRIVINREHLMIDRPYV). The stalk stretch occupies residues 1–154 (MSPQRDRINA…RIKLDYDQYC (154 aa)). Residues 38 to 58 (LLAVLFVMFLSLIGLLAIAGI) traverse the membrane as a helical; Signal-anchor for type II membrane protein segment. Residues 59 to 617 (RLHRAAIYTA…VTREDGTNRR (559 aa)) lie on the Virion surface side of the membrane. N-linked (GlcNAc...) asparagine; by host glycans are attached at residues asparagine 168, asparagine 187, asparagine 200, asparagine 215, and asparagine 238. Intrachain disulfides connect cysteine 188/cysteine 606, cysteine 287/cysteine 300, cysteine 381/cysteine 494, cysteine 386/cysteine 394, and cysteine 570/cysteine 579. The interval 458–543 (PMKNLALGVI…VEHAVVYYVY (86 aa)) is interaction with host NECTIN4 receptor.

This sequence belongs to the paramyxoviruses hemagglutinin-neuraminidase family. Non-sialidase subfamily. In terms of assembly, homodimer; disulfide-linked. Further forms homotetramer (dimer of dimers). Interacts (via C-terminus) with human NECTIN4 (via N-terminus); this interaction allows attachment to the respiratory epithelium and viral entry. Interacts (via C-terminus) with human SLAMF1/CD150 (via N-terminus); this interaction allows attachment and viral entry into the CD150-expressing immune cells. Interacts with human CD46 antigen (via N-terminus); this interaction allows attachment and viral entry of vaccine and laboratory-adapted strains.

It localises to the virion membrane. The protein localises to the host cell membrane. Its function is as follows. Attaches the virus to the human SLAMF1/CD150 receptor for entry into host dendritic cells, macrophages, activated memory T cells and naive or memory B cells, thereby explaining the long immunosuppression that follows infection. In the respiratory airways, binds to the NECTIN4 receptor for entry into the host cell. Binding of H protein to the receptor induces a conformational change that allows the F protein to trigger virion/cell membranes fusion. The vaccine and laboratory-adapted strains use host CD46 as an alternate receptor. The high degree of interaction between H and CD46 results in down-regulation of the latter from the surface of infected cells, rendering them more sensitive to c3b-mediated complement lysis. This Measles virus (strain Edmonston) (MeV) protein is Hemagglutinin glycoprotein (H).